Here is a 103-residue protein sequence, read N- to C-terminus: Histone H4 variant TH091 (103 aa).

Residues 1–20 (MSGRDKGGKGLGKGGAKRHR) are disordered. Ser-2 carries the post-translational modification N-acetylserine. Lys-6, Lys-9, Lys-13, Lys-17, and Lys-21 each carry N6-acetyllysine. A DNA-binding region spans residues 17 to 21 (KRHRK).

Belongs to the histone H4 family. In terms of assembly, the nucleosome is a histone octamer containing two molecules each of H2A, H2B, H3 and H4 assembled in one H3-H4 heterotetramer and two H2A-H2B heterodimers. The octamer wraps approximately 147 bp of DNA.

The protein resides in the nucleus. Its subcellular location is the chromosome. Its function is as follows. Core component of nucleosome. Nucleosomes wrap and compact DNA into chromatin, limiting DNA accessibility to the cellular machineries which require DNA as a template. Histones thereby play a central role in transcription regulation, DNA repair, DNA replication and chromosomal stability. DNA accessibility is regulated via a complex set of post-translational modifications of histones, also called histone code, and nucleosome remodeling. The protein is Histone H4 variant TH091 of Triticum aestivum (Wheat).